The sequence spans 252 residues: MILHAQAKHGKPGLPWLVFLHGFSGDCHEWQEVGEVFADYSRLYVDLPGHGGSAAISVDGFDDVTGLLCKTLVSYNILDFWLVGYSLGGRVAMMAACQGLAGLCGVVVEGGHPGLQNAEQRTQRQRSDRQWAQRFRTEPLTAVFADWYQQPVFASLNDEQRRELVALRSNNNGATLAAMLEATSLAVQPDLRANLSARTFAFYYLCGERDSKFRALAAELAAECHVIPRAGHNAHRENPAGVIASLAQILRF.

It belongs to the AB hydrolase superfamily. MenH family. As to quaternary structure, monomer.

It catalyses the reaction 5-enolpyruvoyl-6-hydroxy-2-succinyl-cyclohex-3-ene-1-carboxylate = (1R,6R)-6-hydroxy-2-succinyl-cyclohexa-2,4-diene-1-carboxylate + pyruvate. The protein operates within quinol/quinone metabolism; 1,4-dihydroxy-2-naphthoate biosynthesis; 1,4-dihydroxy-2-naphthoate from chorismate: step 3/7. It functions in the pathway quinol/quinone metabolism; menaquinone biosynthesis. Its function is as follows. Catalyzes a proton abstraction reaction that results in 2,5-elimination of pyruvate from 2-succinyl-5-enolpyruvyl-6-hydroxy-3-cyclohexene-1-carboxylate (SEPHCHC) and the formation of 2-succinyl-6-hydroxy-2,4-cyclohexadiene-1-carboxylate (SHCHC). This chain is 2-succinyl-6-hydroxy-2,4-cyclohexadiene-1-carboxylate synthase, found in Escherichia coli (strain SMS-3-5 / SECEC).